Reading from the N-terminus, the 482-residue chain is Ribosomal protein uS12 methylthiotransferase RimO (482 aa).

Residues 2–115 enclose the MTTase N-terminal domain; sequence MKVHIITLGC…IAEVVETFQP (114 aa). Residues Cys11, Cys47, Cys79, Cys177, Cys181, and Cys184 each contribute to the [4Fe-4S] cluster site. One can recognise a Radical SAM core domain in the interval 163-394; that stretch reads RAVGPSAYLK…MRLQQRISRE (232 aa). The 70-residue stretch at 397 to 466 folds into the TRAM domain; sequence RRWLGRVVRV…DYDLWGDVVG (70 aa).

It belongs to the methylthiotransferase family. RimO subfamily. The cofactor is [4Fe-4S] cluster.

It localises to the cytoplasm. The catalysed reaction is L-aspartate(89)-[ribosomal protein uS12]-hydrogen + (sulfur carrier)-SH + AH2 + 2 S-adenosyl-L-methionine = 3-methylsulfanyl-L-aspartate(89)-[ribosomal protein uS12]-hydrogen + (sulfur carrier)-H + 5'-deoxyadenosine + L-methionine + A + S-adenosyl-L-homocysteine + 2 H(+). Functionally, catalyzes the methylthiolation of an aspartic acid residue of ribosomal protein uS12. The protein is Ribosomal protein uS12 methylthiotransferase RimO of Roseiflexus castenholzii (strain DSM 13941 / HLO8).